Here is a 422-residue protein sequence, read N- to C-terminus: Histidine--tRNA ligase (422 aa).

The protein belongs to the class-II aminoacyl-tRNA synthetase family. As to quaternary structure, homodimer.

Its subcellular location is the cytoplasm. The enzyme catalyses tRNA(His) + L-histidine + ATP = L-histidyl-tRNA(His) + AMP + diphosphate + H(+). The sequence is that of Histidine--tRNA ligase from Prosthecochloris aestuarii (strain DSM 271 / SK 413).